The following is an 844-amino-acid chain: Putative ubiquitin thioesterase 232R (844 aa).

Disordered regions lie at residues 136–223, 261–287, 326–377, and 422–541; these read NSST…DEAE, SRRK…PPME, LLNG…PELT, and QKKQ…KLSV. A compositionally biased stretch (low complexity) spans 137–216; it reads SSTRSRSPSV…PSRQSVRQSS (80 aa). Low complexity-rich tracts occupy residues 332–341 and 354–364; these read RPSPSLPQSR and RSPSVGSPSVR. A compositionally biased stretch (pro residues) spans 429–438; it reads SPSPTPPSPV. Residues 472-485 show a composition bias toward basic and acidic residues; that stretch reads VQKKMGKSGEREPK. Low complexity predominate over residues 504–518; that stretch reads SLRSRLSTQQQTQQS. Residues 526–535 show a composition bias toward basic and acidic residues; it reads ESIKPEESVR. An OTU domain is found at 590-725; it reads YTVKQVSGDG…NYHYTSLVPI (136 aa). Residue Asp-598 is part of the active site. Residue Cys-601 is the Nucleophile of the active site. The active site involves His-718.

The catalysed reaction is Thiol-dependent hydrolysis of ester, thioester, amide, peptide and isopeptide bonds formed by the C-terminal Gly of ubiquitin (a 76-residue protein attached to proteins as an intracellular targeting signal).. Hydrolase that can remove conjugated ubiquitin from proteins and may therefore play an important regulatory role at the level of protein turnover by preventing degradation. The protein is Putative ubiquitin thioesterase 232R of Aedes vexans (Inland floodwater mosquito).